The chain runs to 251 residues: 3-deoxy-manno-octulosonate cytidylyltransferase (251 aa).

Belongs to the KdsB family.

The protein resides in the cytoplasm. It catalyses the reaction 3-deoxy-alpha-D-manno-oct-2-ulosonate + CTP = CMP-3-deoxy-beta-D-manno-octulosonate + diphosphate. Its pathway is nucleotide-sugar biosynthesis; CMP-3-deoxy-D-manno-octulosonate biosynthesis; CMP-3-deoxy-D-manno-octulosonate from 3-deoxy-D-manno-octulosonate and CTP: step 1/1. The protein operates within bacterial outer membrane biogenesis; lipopolysaccharide biosynthesis. Activates KDO (a required 8-carbon sugar) for incorporation into bacterial lipopolysaccharide in Gram-negative bacteria. This chain is 3-deoxy-manno-octulosonate cytidylyltransferase, found in Chelativorans sp. (strain BNC1).